A 451-amino-acid chain; its full sequence is Phosphoglucosamine mutase (451 aa).

Ser-107 functions as the Phosphoserine intermediate in the catalytic mechanism. Residues Ser-107, Asp-246, Asp-248, and Asp-250 each coordinate Mg(2+). Position 107 is a phosphoserine (Ser-107).

Belongs to the phosphohexose mutase family. It depends on Mg(2+) as a cofactor. In terms of processing, activated by phosphorylation.

It carries out the reaction alpha-D-glucosamine 1-phosphate = D-glucosamine 6-phosphate. Catalyzes the conversion of glucosamine-6-phosphate to glucosamine-1-phosphate. This Burkholderia ambifaria (strain MC40-6) protein is Phosphoglucosamine mutase.